Consider the following 279-residue polypeptide: Vacuolar iron transporter cccA (279 aa).

Residues 1–44 (MLGGRHSHWSPQDLEEQAFSPYGTFPPSPTESTETSSSISSTRP) are disordered. The span at 30 to 44 (TESTETSSSISSTRP) shows a compositional bias: low complexity. 5 helical membrane passes run 55-75 (ILGL…LSAL), 80-100 (VVVV…GLGG), 185-205 (ITLA…YFMV), 208-228 (VLVA…VFGY), and 243-263 (IVAG…AAGA).

The protein belongs to the CCC1 family.

Its subcellular location is the vacuole membrane. The enzyme catalyses Fe(2+)(in) = Fe(2+)(out). Functionally, vacuolar iron transporter involved in the transfer of iron from the cytosol to the vacuole for intracellular iron storage. Plays an essential role in iron detoxification during high iron conditions. This is Vacuolar iron transporter cccA from Arthroderma benhamiae (strain ATCC MYA-4681 / CBS 112371) (Trichophyton mentagrophytes).